Here is a 339-residue protein sequence, read N- to C-terminus: Mitogen-activated protein kinase kinase kinase 18 (339 aa).

One can recognise a Protein kinase domain in the interval 3 to 263 (WTRGKTLGRG…ASQLLNHPFL (261 aa)). ATP contacts are provided by residues 9-17 (LGRGSTATV) and Lys32. The active-site Proton acceptor is Asp131. Residue Ser301 is modified to Phosphoserine.

Belongs to the protein kinase superfamily. Ser/Thr protein kinase family. Interacts with ABI1. Binds to MKK3. Associates with SRK2E within the nucleus. Autophosphorylated. In terms of processing, unstable protein degraded by the proteasome pathway; this degradation is promoted by ABI1, but blocked by ABA. In terms of tissue distribution, expressed in roots, leaves and flowers.

The protein localises to the nucleus. The catalysed reaction is L-seryl-[protein] + ATP = O-phospho-L-seryl-[protein] + ADP + H(+). The enzyme catalyses L-threonyl-[protein] + ATP = O-phospho-L-threonyl-[protein] + ADP + H(+). Kinase activity is activated by abscisic acid (ABA). Inhibited by ABI1. Activated by SRK2E. Functionally, component of the abscisic acid (ABA) signaling pathway that acts as ABA signal transducer in the context of abiotic stresses. Triggers MPK1, MPK2, MPK7 and MPK14 activation in a MKK3-dependent manner and MPK6 activation in a MKK3-independent manner. Mediates the ABA-dependent activation of the MKK3-MPK7 module. Positive regulator of ABA responses leading to the induction of gene expression (e.g. RD29B and RAB18) and involved in various responses including stomatal development, stomatal movement, inhibition of germination and root growth. Promotes leaf senescence. This Arabidopsis thaliana (Mouse-ear cress) protein is Mitogen-activated protein kinase kinase kinase 18.